A 250-amino-acid polypeptide reads, in one-letter code: uncharacterized protein (250 aa).

A signal peptide spans 1 to 25; sequence MKTLRTLCVLMILSGVIFFGLKIDA.

This is an uncharacterized protein from Bacillus subtilis (strain 168).